Consider the following 255-residue polypeptide: Imidazole glycerol phosphate synthase subunit HisF (255 aa).

Catalysis depends on residues aspartate 11 and aspartate 130.

The protein belongs to the HisA/HisF family. In terms of assembly, heterodimer of HisH and HisF.

The protein resides in the cytoplasm. It catalyses the reaction 5-[(5-phospho-1-deoxy-D-ribulos-1-ylimino)methylamino]-1-(5-phospho-beta-D-ribosyl)imidazole-4-carboxamide + L-glutamine = D-erythro-1-(imidazol-4-yl)glycerol 3-phosphate + 5-amino-1-(5-phospho-beta-D-ribosyl)imidazole-4-carboxamide + L-glutamate + H(+). Its pathway is amino-acid biosynthesis; L-histidine biosynthesis; L-histidine from 5-phospho-alpha-D-ribose 1-diphosphate: step 5/9. Functionally, IGPS catalyzes the conversion of PRFAR and glutamine to IGP, AICAR and glutamate. The HisF subunit catalyzes the cyclization activity that produces IGP and AICAR from PRFAR using the ammonia provided by the HisH subunit. The protein is Imidazole glycerol phosphate synthase subunit HisF of Prochlorococcus marinus subsp. pastoris (strain CCMP1986 / NIES-2087 / MED4).